A 103-amino-acid polypeptide reads, in one-letter code: Matrix Gla protein (103 aa).

The first 19 residues, 1–19 (MKSLLPLAILAALAVAALC), serve as a signal peptide directing secretion. A 4-carboxyglutamate modification is found at E21. A phosphoserine mark is found at S22, S25, and S28. The 47-residue stretch at 51 to 97 (HAKAQERVRELNKPAQEINREACDDYKLCERYALIYGYNAAYNRYFR) folds into the Gla domain. 4 positions are modified to 4-carboxyglutamate: E56, E60, E67, and E71. C73 and C79 are joined by a disulfide.

It belongs to the osteocalcin/matrix Gla protein family. In terms of processing, requires vitamin K-dependent gamma-carboxylation for its function.

Its subcellular location is the secreted. In terms of biological role, associates with the organic matrix of bone and cartilage. Thought to act as an inhibitor of bone formation. This chain is Matrix Gla protein (Mgp), found in Rattus norvegicus (Rat).